The chain runs to 97 residues: MSRKCDLTGVGVLYGNNVSHSQRKTRRRFEPNLRSVKFKSDITSGAYRLLVNARCISSVEKAGGFDAYILKADDNVLSSAARAIKKKIIQTKTAKSL.

This sequence belongs to the bacterial ribosomal protein bL28 family.

The polypeptide is Large ribosomal subunit protein bL28 (Rickettsia canadensis (strain McKiel)).